A 570-amino-acid polypeptide reads, in one-letter code: Cation/calcium exchanger 1 (570 aa).

13 helical membrane passes run 14-34 (LSLL…ASQT), 97-117 (SPVL…YLLG), 141-161 (MAGV…SSVV), 176-196 (ILGG…VLIG), 212-232 (VFLL…KVTI), 235-255 (ALCY…SHFF), 344-364 (CAVV…CSHY), 371-391 (LILY…AYLT), 401-421 (FSLV…YMIA), 427-447 (LLIS…LTVL), 479-499 (YAGP…ISSL), 513-533 (SLLE…VIMP), and 546-566 (GLLA…FGVL).

It belongs to the Ca(2+):cation antiporter (CaCA) (TC 2.A.19) family. Cation/calcium exchanger (CCX) subfamily. As to expression, expressed in roots, leaves, stems and flowers.

Its subcellular location is the vacuole membrane. Vacuolar membrane-localized H(+)-dependent K(+) and Na(+) transporter. The polypeptide is Cation/calcium exchanger 1 (CCX1) (Arabidopsis thaliana (Mouse-ear cress)).